The chain runs to 31 residues: Conotoxin pc6d (31 aa).

Disulfide bonds link Cys-2–Cys-20, Cys-9–Cys-25, and Cys-19–Cys-29.

This sequence belongs to the conotoxin O1 superfamily. In terms of tissue distribution, expressed by the venom duct.

Its subcellular location is the secreted. In Conus pictus (Cone snail), this protein is Conotoxin pc6d.